We begin with the raw amino-acid sequence, 443 residues long: Aspartate--tRNA(Asp/Asn) ligase (443 aa).

Glu-175 is a binding site for L-aspartate. The interval 197–200 (QLFK) is aspartate. Arg-219 contributes to the L-aspartate binding site. ATP is bound by residues 219–221 (RAE), 227–229 (RHL), and Glu-366. Mg(2+) is bound by residues Glu-366 and Ser-369. Residues Ser-369 and Arg-373 each contribute to the L-aspartate site. ATP is bound at residue 414–417 (GCER).

This sequence belongs to the class-II aminoacyl-tRNA synthetase family. Type 2 subfamily. Homodimer. Mg(2+) is required as a cofactor.

Its subcellular location is the cytoplasm. It carries out the reaction tRNA(Asx) + L-aspartate + ATP = L-aspartyl-tRNA(Asx) + AMP + diphosphate. In terms of biological role, aspartyl-tRNA synthetase with relaxed tRNA specificity since it is able to aspartylate not only its cognate tRNA(Asp) but also tRNA(Asn). Reaction proceeds in two steps: L-aspartate is first activated by ATP to form Asp-AMP and then transferred to the acceptor end of tRNA(Asp/Asn). The chain is Aspartate--tRNA(Asp/Asn) ligase from Methanococcoides burtonii (strain DSM 6242 / NBRC 107633 / OCM 468 / ACE-M).